The sequence spans 189 residues: Potassium-transporting ATPase KdpC subunit (189 aa).

The chain crosses the membrane as a helical span at residues 6 to 26; sequence PAIMMVLVFTIICGGIYPAVV.

The protein belongs to the KdpC family. In terms of assembly, the system is composed of three essential subunits: KdpA, KdpB and KdpC.

It localises to the cell inner membrane. Functionally, part of the high-affinity ATP-driven potassium transport (or Kdp) system, which catalyzes the hydrolysis of ATP coupled with the electrogenic transport of potassium into the cytoplasm. This subunit acts as a catalytic chaperone that increases the ATP-binding affinity of the ATP-hydrolyzing subunit KdpB by the formation of a transient KdpB/KdpC/ATP ternary complex. This Geobacter metallireducens (strain ATCC 53774 / DSM 7210 / GS-15) protein is Potassium-transporting ATPase KdpC subunit.